Consider the following 590-residue polypeptide: MPLGGFAGLKEKLNPGKEELKNNVGDSLGNLQKKIDGSNVTEEDNIELTEDGRPVAAPKRSPPLLDCGCFGLPKRYIIAMLSGLGFCISFGIRCNLGVAIVEMVNNNTVYINGTAVMQPAQFNWDPETVGLIHGSFFWGYIVTQIPGGFISNKLAANRVFGAAIFLTSVLNMFIPSAARVHYGCVMFVRILQGLVEGVTYPACHGMWSKWAPPLERSRLATTSFCGSYAGAVIAMPLAGILVQYVGWPSVFYIYGVFGIIWYIFWILLAYNSPAVHPTISEEERNYIETSIGEGANLMSSTEKFKTPWREFFTSMPVYAIIVANFCRSWTFYLLLISQPAYFEEVFGFPISKVGILSAVPHMVMTIIVPIGGQLADFLRSRKILSTTTVRKIMNCGGFGMEATLLLVVGFSHTRAVAISFLILAVGFSGFAISGFNVNHLDIAPRYASILMGISNGVGTLSGMVCPLIVGALTKHKTRLEWQHVFVIASMVHYTGVIFYAIFASGEKQDWADPENTSDEKCGIIGEDELADETEPSSDSGLATRQKTYGTTDNSSGRKQGWKKKRGVTMQAEDDHESNHYENGEYQTQYQ.

Residues 1 to 76 lie on the Cytoplasmic side of the membrane; the sequence is MPLGGFAGLK…CGCFGLPKRY (76 aa). The helical transmembrane segment at 77 to 97 threads the bilayer; it reads IIAMLSGLGFCISFGIRCNLG. The Vesicular portion of the chain corresponds to 98 to 130; it reads VAIVEMVNNNTVYINGTAVMQPAQFNWDPETVG. N-linked (GlcNAc...) asparagine glycosylation is found at asparagine 106 and asparagine 112. Residues 131–151 form a helical membrane-spanning segment; that stretch reads LIHGSFFWGYIVTQIPGGFIS. The Cytoplasmic portion of the chain corresponds to 152-153; that stretch reads NK. The chain crosses the membrane as a helical span at residues 154–174; that stretch reads LAANRVFGAAIFLTSVLNMFI. Residues 175–182 lie on the Vesicular side of the membrane; the sequence is PSAARVHY. Residues 183–203 form a helical membrane-spanning segment; it reads GCVMFVRILQGLVEGVTYPAC. Residues 204-221 are Cytoplasmic-facing; sequence HGMWSKWAPPLERSRLAT. A helical membrane pass occupies residues 222–242; it reads TSFCGSYAGAVIAMPLAGILV. Over 243 to 249 the chain is Vesicular; that stretch reads QYVGWPS. Residues 250–270 traverse the membrane as a helical segment; the sequence is VFYIYGVFGIIWYIFWILLAY. The Cytoplasmic portion of the chain corresponds to 271–315; sequence NSPAVHPTISEEERNYIETSIGEGANLMSSTEKFKTPWREFFTSM. The helical transmembrane segment at 316–336 threads the bilayer; it reads PVYAIIVANFCRSWTFYLLLI. The Vesicular segment spans residues 337 to 354; the sequence is SQPAYFEEVFGFPISKVG. The helical transmembrane segment at 355–375 threads the bilayer; it reads ILSAVPHMVMTIIVPIGGQLA. Residues 376 to 391 are Cytoplasmic-facing; that stretch reads DFLRSRKILSTTTVRK. The chain crosses the membrane as a helical span at residues 392–412; sequence IMNCGGFGMEATLLLVVGFSH. Residues 413 to 414 are Vesicular-facing; the sequence is TR. The chain crosses the membrane as a helical span at residues 415–435; the sequence is AVAISFLILAVGFSGFAISGF. Residues 436-448 are Cytoplasmic-facing; sequence NVNHLDIAPRYAS. Residues 449-469 form a helical membrane-spanning segment; it reads ILMGISNGVGTLSGMVCPLIV. Topologically, residues 470-482 are vesicular; the sequence is GALTKHKTRLEWQ. Residues 483 to 503 traverse the membrane as a helical segment; that stretch reads HVFVIASMVHYTGVIFYAIFA. Topologically, residues 504-587 are cytoplasmic; that stretch reads SGEKQDWADP…NHYENGEYQT (84 aa). Residues 526 to 535 show a composition bias toward acidic residues; sequence EDELADETEP. Positions 526-590 are disordered; the sequence is EDELADETEP…ENGEYQTQYQ (65 aa). Positions 536 to 557 are enriched in polar residues; it reads SSDSGLATRQKTYGTTDNSSGR.

Belongs to the major facilitator superfamily. Sodium/anion cotransporter family. VGLUT subfamily.

The protein resides in the cytoplasmic vesicle. It is found in the secretory vesicle. Its subcellular location is the synaptic vesicle membrane. It localises to the cell membrane. The protein localises to the synapse. The protein resides in the synaptosome. It catalyses the reaction L-glutamate(out) = L-glutamate(in). The catalysed reaction is 3 Na(+)(out) + phosphate(out) = 3 Na(+)(in) + phosphate(in). It carries out the reaction chloride(in) = chloride(out). The L-glutamate uniporter activity exhibits a biphasic dependence on chloride concentration. Chloride channel activity is allosterically activated by lumenal H(+) and Cl(-) leading to synaptic vesicles acidification. The glutamate transport activity is allosterically activated by lumenal H(+) and Cl(-), preventing non-vesicular L-glutamate release. Multifunctional transporter that transports L-glutamate as well as multiple ions such as chloride, sodium and phosphate. At the synaptic vesicle membrane, mainly functions as an uniporter that mediates the uptake of L-glutamate into synaptic vesicles at presynaptic nerve terminals of excitatory neural cells. The L-glutamate uniporter activity is electrogenic and is driven by the proton electrochemical gradient, mainly by the electrical gradient established by the vacuolar H(+)-ATPase across the synaptic vesicle membrane. In addition, functions as a chloride channel that allows a chloride permeation through the synaptic vesicle membrane that affects the proton electrochemical gradient and promotes synaptic vesicles acidification. At the plasma membrane, following exocytosis, functions as a symporter of Na(+) and phosphate from the extracellular space to the cytoplasm allowing synaptic phosphate homeostasis regulation. The symporter activity is electrogenic. Moreover, operates synergistically with SLC18A3/VACHT under a constant H(+) gradient, thereby allowing striatal vesicular acetylcholine uptake. This Danio rerio (Zebrafish) protein is Vesicular glutamate transporter 3.